A 446-amino-acid chain; its full sequence is Chromosomal replication initiator protein DnaA (446 aa).

Positions 1-81 are domain I, interacts with DnaA modulators; the sequence is MENIADLWNS…AKLNIRFIIP (81 aa). A domain II region spans residues 81–109; it reads PQSQTEEEVDYPPAKAKKMNDESNHLPQS. The domain III, AAA+ region stretch occupies residues 110–326; it reads MLNPKYTFDT…GALIRVVAYS (217 aa). ATP contacts are provided by G154, G156, K157, and T158. The interval 327 to 446 is domain IV, binds dsDNA; it reads SLINKDINAD…QIEEINDILK (120 aa).

The protein belongs to the DnaA family. In terms of assembly, oligomerizes as a right-handed, spiral filament on DNA at oriC.

Its subcellular location is the cytoplasm. In terms of biological role, plays an essential role in the initiation and regulation of chromosomal replication. ATP-DnaA binds to the origin of replication (oriC) to initiate formation of the DNA replication initiation complex once per cell cycle. Binds the DnaA box (a 9 base pair repeat at the origin) and separates the double-stranded (ds)DNA. Forms a right-handed helical filament on oriC DNA; dsDNA binds to the exterior of the filament while single-stranded (ss)DNA is stabiized in the filament's interior. The ATP-DnaA-oriC complex binds and stabilizes one strand of the AT-rich DNA unwinding element (DUE), permitting loading of DNA polymerase. After initiation quickly degrades to an ADP-DnaA complex that is not apt for DNA replication. Binds acidic phospholipids. This is Chromosomal replication initiator protein DnaA from Bacillus cytotoxicus (strain DSM 22905 / CIP 110041 / 391-98 / NVH 391-98).